The chain runs to 220 residues: U1 small nuclear ribonucleoprotein C (220 aa).

A Matrin-type zinc finger spans residues 4 to 36; the sequence is FFCDYCDVYLTHDSISVRKAHNSGRNHLRNVVD. Residues 197 to 220 are disordered; sequence PLGGFPAGAPLPGAPPGYGPPGAK. Over residues 208–220 the composition is skewed to pro residues; it reads PGAPPGYGPPGAK.

This sequence belongs to the U1 small nuclear ribonucleoprotein C family. U1 snRNP is composed of the 7 core Sm proteins B/B', D1, D2, D3, E, F and G that assemble in a heptameric protein ring on the Sm site of the small nuclear RNA to form the core snRNP, and at least 3 U1 snRNP-specific proteins U1-70K, U1-A and U1-C. U1-C interacts with U1 snRNA and the 5' splice-site region of the pre-mRNA.

The protein localises to the nucleus. Component of the spliceosomal U1 snRNP, which is essential for recognition of the pre-mRNA 5' splice-site and the subsequent assembly of the spliceosome. U1-C is directly involved in initial 5' splice-site recognition for both constitutive and regulated alternative splicing. The interaction with the 5' splice-site seems to precede base-pairing between the pre-mRNA and the U1 snRNA. Stimulates commitment or early (E) complex formation by stabilizing the base pairing of the 5' end of the U1 snRNA and the 5' splice-site region. This Tuber melanosporum (strain Mel28) (Perigord black truffle) protein is U1 small nuclear ribonucleoprotein C.